A 109-amino-acid chain; its full sequence is Large ribosomal subunit protein uL22 (109 aa).

This sequence belongs to the universal ribosomal protein uL22 family. As to quaternary structure, part of the 50S ribosomal subunit.

Functionally, this protein binds specifically to 23S rRNA; its binding is stimulated by other ribosomal proteins, e.g. L4, L17, and L20. It is important during the early stages of 50S assembly. It makes multiple contacts with different domains of the 23S rRNA in the assembled 50S subunit and ribosome. The globular domain of the protein is located near the polypeptide exit tunnel on the outside of the subunit, while an extended beta-hairpin is found that lines the wall of the exit tunnel in the center of the 70S ribosome. This is Large ribosomal subunit protein uL22 from Cupriavidus taiwanensis (strain DSM 17343 / BCRC 17206 / CCUG 44338 / CIP 107171 / LMG 19424 / R1) (Ralstonia taiwanensis (strain LMG 19424)).